Consider the following 682-residue polypeptide: DNA ligase (682 aa).

Residues 42–46 (DAEYD), 91–92 (SL), and E124 each bind NAD(+). K126 functions as the N6-AMP-lysine intermediate in the catalytic mechanism. NAD(+) contacts are provided by R147, E184, K302, and K326. 4 residues coordinate Zn(2+): C420, C423, C438, and C444. In terms of domain architecture, BRCT spans 603 to 682 (IADNPLKGKS…QEFIALTGEN (80 aa)).

It belongs to the NAD-dependent DNA ligase family. LigA subfamily. Mg(2+) serves as cofactor. Mn(2+) is required as a cofactor.

It carries out the reaction NAD(+) + (deoxyribonucleotide)n-3'-hydroxyl + 5'-phospho-(deoxyribonucleotide)m = (deoxyribonucleotide)n+m + AMP + beta-nicotinamide D-nucleotide.. DNA ligase that catalyzes the formation of phosphodiester linkages between 5'-phosphoryl and 3'-hydroxyl groups in double-stranded DNA using NAD as a coenzyme and as the energy source for the reaction. It is essential for DNA replication and repair of damaged DNA. This chain is DNA ligase, found in Actinobacillus pleuropneumoniae serotype 7 (strain AP76).